A 109-amino-acid polypeptide reads, in one-letter code: T cell receptor alpha variable 26-1 (109 aa).

Residues 1–19 (MRLVARVTVFLTFGTIIDA) form the signal peptide. The region spanning 20-109 (KTTQPTSMDC…TAVYYCIVRV (90 aa)) is the Ig-like domain. Cysteines 39 and 105 form a disulfide. N-linked (GlcNAc...) asparagine glycans are attached at residues Asn-40 and Asn-71.

As to quaternary structure, alpha-beta TR is a heterodimer composed of an alpha and beta chain; disulfide-linked. The alpha-beta TR is associated with the transmembrane signaling CD3 coreceptor proteins to form the TR-CD3 (TcR or TCR). The assembly of alpha-beta TR heterodimers with CD3 occurs in the endoplasmic reticulum where a single alpha-beta TR heterodimer associates with one CD3D-CD3E heterodimer, one CD3G-CD3E heterodimer and one CD247 homodimer forming a stable octameric structure. CD3D-CD3E and CD3G-CD3E heterodimers preferentially associate with TR alpha and TR beta chains, respectively. The association of the CD247 homodimer is the last step of TcR assembly in the endoplasmic reticulum and is required for transport to the cell surface.

The protein localises to the cell membrane. Its function is as follows. V region of the variable domain of T cell receptor (TR) alpha chain that participates in the antigen recognition. Alpha-beta T cell receptors are antigen specific receptors which are essential to the immune response and are present on the cell surface of T lymphocytes. Recognize peptide-major histocompatibility (MH) (pMH) complexes that are displayed by antigen presenting cells (APC), a prerequisite for efficient T cell adaptive immunity against pathogens. Binding of alpha-beta TR to pMH complex initiates TR-CD3 clustering on the cell surface and intracellular activation of LCK that phosphorylates the ITAM motifs of CD3G, CD3D, CD3E and CD247 enabling the recruitment of ZAP70. In turn ZAP70 phosphorylates LAT, which recruits numerous signaling molecules to form the LAT signalosome. The LAT signalosome propagates signal branching to three major signaling pathways, the calcium, the mitogen-activated protein kinase (MAPK) kinase and the nuclear factor NF-kappa-B (NF-kB) pathways, leading to the mobilization of transcription factors that are critical for gene expression and essential for T cell growth and differentiation. The T cell repertoire is generated in the thymus, by V-(D)-J rearrangement. This repertoire is then shaped by intrathymic selection events to generate a peripheral T cell pool of self-MH restricted, non-autoaggressive T cells. Post-thymic interaction of alpha-beta TR with the pMH complexes shapes TR structural and functional avidity. This is T cell receptor alpha variable 26-1 from Homo sapiens (Human).